Reading from the N-terminus, the 1179-residue chain is Pesticidal crystal protein Cry1Ad (1179 aa).

The protein belongs to the delta endotoxin family.

In terms of biological role, promotes colloidosmotic lysis by binding to the midgut epithelial cells of many lepidopteran larvae. This Bacillus thuringiensis subsp. aizawai protein is Pesticidal crystal protein Cry1Ad (cry1Ad).